We begin with the raw amino-acid sequence, 185 residues long: Small ribosomal subunit protein bS16 (185 aa).

The disordered stretch occupies residues 83–185; that stretch reads QWTHGNNPEK…APASEETTEG (103 aa). Over residues 89-125 the composition is skewed to basic and acidic residues; sequence NPEKAKPGKKAQERDAERTQRDADRVAAEAQAKEDAK. 2 stretches are compositionally biased toward low complexity: residues 126-146 and 159-176; these read AAAAEAAEAAAAAAAEAAAAP and VEAAAEEAPAAEAAAEEA.

This sequence belongs to the bacterial ribosomal protein bS16 family.

This Caulobacter sp. (strain K31) protein is Small ribosomal subunit protein bS16.